The following is an 86-amino-acid chain: Exodeoxyribonuclease 7 small subunit (86 aa).

Belongs to the XseB family. Heterooligomer composed of large and small subunits.

The protein resides in the cytoplasm. The enzyme catalyses Exonucleolytic cleavage in either 5'- to 3'- or 3'- to 5'-direction to yield nucleoside 5'-phosphates.. Functionally, bidirectionally degrades single-stranded DNA into large acid-insoluble oligonucleotides, which are then degraded further into small acid-soluble oligonucleotides. The polypeptide is Exodeoxyribonuclease 7 small subunit (Xanthomonas oryzae pv. oryzae (strain MAFF 311018)).